A 317-amino-acid chain; its full sequence is Ribosomal protein L11 methyltransferase (317 aa).

Residues Thr-158, Gly-179, Asp-201, and Asn-244 each contribute to the S-adenosyl-L-methionine site.

This sequence belongs to the methyltransferase superfamily. PrmA family.

It localises to the cytoplasm. It catalyses the reaction L-lysyl-[protein] + 3 S-adenosyl-L-methionine = N(6),N(6),N(6)-trimethyl-L-lysyl-[protein] + 3 S-adenosyl-L-homocysteine + 3 H(+). Methylates ribosomal protein L11. The sequence is that of Ribosomal protein L11 methyltransferase from Streptococcus agalactiae serotype III (strain NEM316).